The sequence spans 524 residues: Cytochrome P450 6k1 (524 aa).

Position 464 (Cys464) interacts with heme.

The protein belongs to the cytochrome P450 family. Requires heme as cofactor.

The protein resides in the endoplasmic reticulum membrane. Its subcellular location is the microsome membrane. The sequence is that of Cytochrome P450 6k1 (CYP6K1) from Blattella germanica (German cockroach).